Here is a 155-residue protein sequence, read N- to C-terminus: RING finger protein 122 (155 aa).

A helical membrane pass occupies residues 40-60; that stretch reads VIFGTGIFVFMLSLIFCCYFI. The RING-type; atypical zinc-finger motif lies at 93-134; it reads CAVCLEDFKGKDELGVLPCQHAFHRKCLVKWLEVRCVCPMCN.

As to expression, widely expressed in several tissues and cell lines.

The protein localises to the golgi apparatus. It localises to the endoplasmic reticulum. Its subcellular location is the membrane. Functionally, may induce necrosis and apoptosis. May play a role in cell viability. The sequence is that of RING finger protein 122 (RNF122) from Homo sapiens (Human).